The following is a 239-amino-acid chain: Phosphoglycolate phosphatase (239 aa).

The active-site Nucleophile is the Asp9. Mg(2+)-binding residues include Asp9 and Asp11. A substrate-binding site is contributed by Lys157. Mg(2+) is bound by residues Asp180 and Asp184.

This sequence belongs to the archaeal SPP-like hydrolase family. Mg(2+) serves as cofactor.

The enzyme catalyses 2-phosphoglycolate + H2O = glycolate + phosphate. In terms of biological role, catalyzes the dephosphorylation of 2-phosphoglycolate. This chain is Phosphoglycolate phosphatase, found in Thermococcus kodakarensis (strain ATCC BAA-918 / JCM 12380 / KOD1) (Pyrococcus kodakaraensis (strain KOD1)).